A 261-amino-acid chain; its full sequence is Polyamine aminopropyltransferase (261 aa).

The 219-residue stretch at 1–219 (MHPFRRRVRP…AVMAFRQSPS (219 aa)) folds into the PABS domain. S-methyl-5'-thioadenosine-binding positions include aspartate 96 and 124-125 (DG). Residue aspartate 142 is the Proton acceptor of the active site.

The protein belongs to the spermidine/spermine synthase family. In terms of assembly, homodimer or homotetramer.

It is found in the cytoplasm. It catalyses the reaction S-adenosyl 3-(methylsulfanyl)propylamine + putrescine = S-methyl-5'-thioadenosine + spermidine + H(+). Its pathway is amine and polyamine biosynthesis; spermidine biosynthesis; spermidine from putrescine: step 1/1. Functionally, catalyzes the irreversible transfer of a propylamine group from the amino donor S-adenosylmethioninamine (decarboxy-AdoMet) to putrescine (1,4-diaminobutane) to yield spermidine. The polypeptide is Polyamine aminopropyltransferase (Chromobacterium violaceum (strain ATCC 12472 / DSM 30191 / JCM 1249 / CCUG 213 / NBRC 12614 / NCIMB 9131 / NCTC 9757 / MK)).